The chain runs to 133 residues: 14 kDa fatty acid-binding protein (133 aa).

(5Z,8Z,11Z,14Z)-eicosatetraenoate contacts are provided by residues Arg-107 and 127-129; that span reads RNY. Residues Arg-107 and 127 to 129 each bind (9Z)-octadecenoate; that span reads RNY.

Belongs to the calycin superfamily. Fatty-acid binding protein (FABP) family. Tubercles, muscle layers and body.

It is found in the cytoplasm. Functionally, may play a role in the transport of fatty acids. Binds various fatty acids, such as arachidonic, oleic, palmitic and linolenic acid (in vitro). The chain is 14 kDa fatty acid-binding protein from Schistosoma mansoni (Blood fluke).